Consider the following 245-residue polypeptide: Probable phosphatase YPTB2019 (245 aa).

Zn(2+) is bound by residues His7, His9, His15, His40, Glu73, His101, His131, Asp192, and His194.

The protein belongs to the PHP family. In terms of assembly, homotrimer. The cofactor is Zn(2+).

In Yersinia pseudotuberculosis serotype I (strain IP32953), this protein is Probable phosphatase YPTB2019.